The following is a 350-amino-acid chain: Putative ankyrin repeat protein RBE_0589 (350 aa).

ANK repeat units lie at residues 81-110 (DGFT…NPNI), 114-151 (DIVT…EPTD), and 153-182 (SGWT…NLDI).

The chain is Putative ankyrin repeat protein RBE_0589 from Rickettsia bellii (strain RML369-C).